The primary structure comprises 566 residues: Potassium-transporting ATPase potassium-binding subunit (566 aa).

12 helical membrane-spanning segments follow: residues 6–26 (VALL…LGIA), 60–80 (AAAI…LMLF), 128–148 (LGLT…AFVL), 167–187 (IWRI…LFLA), 247–267 (LTNF…CICF), 276–296 (VGSA…LLIM), 331–351 (FGLW…CGAV), 361–381 (LGGL…GGVG), 383–403 (GWYG…LMIG), 423–443 (IGLL…VILP), 492–512 (LMFV…GALI), and 530–550 (LFVG…FIPA).

This sequence belongs to the KdpA family. As to quaternary structure, the system is composed of three essential subunits: KdpA, KdpB and KdpC.

Its subcellular location is the cell inner membrane. Its function is as follows. Part of the high-affinity ATP-driven potassium transport (or Kdp) system, which catalyzes the hydrolysis of ATP coupled with the electrogenic transport of potassium into the cytoplasm. This subunit binds the periplasmic potassium ions and delivers the ions to the membrane domain of KdpB through an intramembrane tunnel. This Tolumonas auensis (strain DSM 9187 / NBRC 110442 / TA 4) protein is Potassium-transporting ATPase potassium-binding subunit.